Reading from the N-terminus, the 445-residue chain is WD repeat domain phosphoinositide-interacting protein 2 (445 aa).

The stretch at 182–222 (AHDSPLAALAFDASGTKLATASEKGTVIRVFSIPEGQKLFE) is one WD 1 repeat. The L/FRRG motif motif lies at 223–226 (FRRG). WD repeat units follow at residues 228 to 267 (KRCV…EKPP) and 311 to 349 (GHKN…GGEC). Ser-395 carries the phosphoserine modification.

This sequence belongs to the WD repeat PROPPIN family. Interacts with TECPR1. Interacts with ATG16L1. Interacts with ATG5. Interacts with WIPI1. Interacts with WDR45. May interact with NUDC. Interacts with ULK1 and RB1CC1.

Its subcellular location is the preautophagosomal structure membrane. Functionally, component of the autophagy machinery that controls the major intracellular degradation process by which cytoplasmic materials are packaged into autophagosomes and delivered to lysosomes for degradation. Involved in an early step of the formation of preautophagosomal structures. Binds and is activated by phosphatidylinositol 3-phosphate (PtdIns3P) forming on membranes of the endoplasmic reticulum upon activation of the upstream ULK1 and PI3 kinases. Mediates ER-isolation membranes contacts by interacting with the ULK1:RB1CC1 complex and PtdIns3P. Once activated, WIPI2 recruits at phagophore assembly sites the ATG12-ATG5-ATG16L1 complex that directly controls the elongation of the nascent autophagosomal membrane. This chain is WD repeat domain phosphoinositide-interacting protein 2, found in Mus musculus (Mouse).